The chain runs to 347 residues: NADH-ubiquinone oxidoreductase chain 2 (347 aa).

A run of 10 helical transmembrane segments spans residues 3 to 23, 25 to 45, 66 to 86, 111 to 131, 149 to 169, 178 to 198, 201 to 221, 237 to 257, 274 to 294, and 325 to 345; these read PPIL…VMLS, HWLL…PILM, ASML…QWVI, FHFW…MILL, INTN…GWGG, IMAY…TYNP, MVLN…LFML, FPLI…LPPL, NMII…YFYL, and LLPP…MLSV.

It belongs to the complex I subunit 2 family. In terms of assembly, core subunit of respiratory chain NADH dehydrogenase (Complex I) which is composed of 45 different subunits. Interacts with TMEM242.

Its subcellular location is the mitochondrion inner membrane. The catalysed reaction is a ubiquinone + NADH + 5 H(+)(in) = a ubiquinol + NAD(+) + 4 H(+)(out). Its function is as follows. Core subunit of the mitochondrial membrane respiratory chain NADH dehydrogenase (Complex I) which catalyzes electron transfer from NADH through the respiratory chain, using ubiquinone as an electron acceptor. Essential for the catalytic activity and assembly of complex I. This chain is NADH-ubiquinone oxidoreductase chain 2, found in Canis lupus familiaris (Dog).